The sequence spans 307 residues: Nucleotide-binding protein Achl_1824 (307 aa).

ATP is bound at residue 30-37 (GMSGAGRS). 81–84 (DVRS) contributes to the GTP binding site.

This sequence belongs to the RapZ-like family.

Functionally, displays ATPase and GTPase activities. The polypeptide is Nucleotide-binding protein Achl_1824 (Pseudarthrobacter chlorophenolicus (strain ATCC 700700 / DSM 12829 / CIP 107037 / JCM 12360 / KCTC 9906 / NCIMB 13794 / A6) (Arthrobacter chlorophenolicus)).